The primary structure comprises 209 residues: A-type ATP synthase subunit D (209 aa).

It belongs to the V-ATPase D subunit family. Has multiple subunits with at least A(3), B(3), C, D, E, F, H, I and proteolipid K(x).

The protein localises to the cell membrane. Component of the A-type ATP synthase that produces ATP from ADP in the presence of a proton gradient across the membrane. The polypeptide is A-type ATP synthase subunit D (Sulfolobus acidocaldarius (strain ATCC 33909 / DSM 639 / JCM 8929 / NBRC 15157 / NCIMB 11770)).